Consider the following 1486-residue polypeptide: Phosphatidylinositol 3-kinase C2 domain-containing subunit gamma (1486 aa).

One can recognise a PI3K-RBD domain in the interval 285–371; sequence KTKFNIHIFI…IQLHLQKSRE (87 aa). The region spanning 521–669 is the C2 PI3K-type domain; that stretch reads LPSHLSFTVY…SPVTLQIDFP (149 aa). The PIK helical domain maps to 684–860; it reads RSNLEEPLKE…QKLLAALQFC (177 aa). In terms of domain architecture, PI3K/PI4K catalytic spans 929-1207; it reads DHDACSYFTS…KIKESLECFP (279 aa). Residues 935 to 941 form a G-loop region; that stretch reads YFTSNAL. The segment at 1071–1079 is catalytic loop; sequence GVCDRHNDN. The interval 1090-1116 is activation loop; it reads HIDFGKFLGHAQTFGGIKRDRAPFIFT. The region spanning 1240–1352 is the PX domain; sequence LSTTRSIERA…SFFLSEAVQQ (113 aa). Positions 1369 to 1486 constitute a C2 domain; the sequence is KKPKVQLVIS…KWYPLGNSII (118 aa).

It belongs to the PI3/PI4-kinase family. Highly expressed in liver, prostate and testis. Lower levels in small intestine, kidney and pancreas.

The protein localises to the membrane. The catalysed reaction is a 1,2-diacyl-sn-glycero-3-phospho-(1D-myo-inositol 4-phosphate) + ATP = a 1,2-diacyl-sn-glycero-3-phospho-(1D-myo-inositol-3,4-bisphosphate) + ADP + H(+). The enzyme catalyses a 1,2-diacyl-sn-glycero-3-phospho-(1D-myo-inositol) + ATP = a 1,2-diacyl-sn-glycero-3-phospho-(1D-myo-inositol-3-phosphate) + ADP + H(+). Functionally, generates phosphatidylinositol 3-phosphate (PtdIns3P) and phosphatidylinositol 3,4-bisphosphate (PtdIns(3,4)P2) that act as second messengers. May play a role in SDF1A-stimulated chemotaxis. This Homo sapiens (Human) protein is Phosphatidylinositol 3-kinase C2 domain-containing subunit gamma (PIK3C2G).